The following is a 355-amino-acid chain: Oligopeptide transport ATP-binding protein AmiE (355 aa).

The ABC transporter domain occupies 9-260; the sequence is LTARDIVVEF…PRHPYTWSLL (252 aa). 45-52 serves as a coordination point for ATP; that stretch reads GESGSGKS.

This sequence belongs to the ABC transporter superfamily.

It is found in the cell membrane. In terms of biological role, part of the binding-protein-dependent transport system for oligopeptides. Probably responsible for energy coupling to the transport system. The polypeptide is Oligopeptide transport ATP-binding protein AmiE (amiE) (Streptococcus pneumoniae serotype 4 (strain ATCC BAA-334 / TIGR4)).